Here is a 440-residue protein sequence, read N- to C-terminus: MENIQKLIARYPLVEDLVALKETTWFNPGATSLAQGLPYVGLTEQDVNAAHDRLARFAPYLAKAFPQTAAAGGMIESDVVAIPAMQKRLEKEYGQTIDGEMLLKKDSHLAISGSIKARGGIYEVLTHAEKLALEAGLLTTDDDYSVLLSPEFKQFFSQYSIAVGSTGNLGLSIGIMSACIGFKVTVHMSADARAWKKAKLRSHGVTVVEYEDDYGVAVEQGRKAAQSDPNCFFIDDENSRTLFLGYAVAGQRLKAQFAQQGRVVDASHPLFVYLPCGVGGGPGGVAFGLKLAFGDNVHCFFAEPTHSPCMLLGVYTGLHDAISVQDIGIDNLTAADGLAVGRASGFVGRAMERLLDGLYTLDDQTMYDMLGWLAQEEGIRLEPSALAGMAGPQRICAATVYQQRHGFSQTQLGNATHLVWATGGGMVPEDEMEQYLAKGR.

Lysine 116 is modified (N6-(pyridoxal phosphate)lysine).

The protein belongs to the serine/threonine dehydratase family. DsdA subfamily. Monomer. The cofactor is pyridoxal 5'-phosphate.

It carries out the reaction D-serine = pyruvate + NH4(+). This Salmonella schwarzengrund (strain CVM19633) protein is D-serine dehydratase.